We begin with the raw amino-acid sequence, 439 residues long: ATP-dependent protease ATPase subunit HslU (439 aa).

ATP-binding positions include I17, 59–64 (GVGKTE), D251, E317, and R389.

The protein belongs to the ClpX chaperone family. HslU subfamily. A double ring-shaped homohexamer of HslV is capped on each side by a ring-shaped HslU homohexamer. The assembly of the HslU/HslV complex is dependent on binding of ATP.

The protein localises to the cytoplasm. ATPase subunit of a proteasome-like degradation complex; this subunit has chaperone activity. The binding of ATP and its subsequent hydrolysis by HslU are essential for unfolding of protein substrates subsequently hydrolyzed by HslV. HslU recognizes the N-terminal part of its protein substrates and unfolds these before they are guided to HslV for hydrolysis. In Campylobacter jejuni subsp. jejuni serotype O:6 (strain 81116 / NCTC 11828), this protein is ATP-dependent protease ATPase subunit HslU.